The primary structure comprises 548 residues: Mannosyltransferase APTG1 (548 aa).

Positions 1–23 (MDIRKRKNAGGDGDGGADGASVN) are disordered. Helical transmembrane passes span 41 to 61 (IFLF…TYFN), 98 to 118 (LFAF…YIMI), and 146 to 166 (GNVA…FFCL). A glycan (N-linked (GlcNAc...) asparagine) is linked at asparagine 167. A run of 7 helical transmembrane segments spans residues 169-189 (TFSN…WPCI), 204-224 (LVIA…WLYV), 238-258 (FIIL…CLLD), 260-280 (LMYG…FLSS), 294-314 (FTQG…AGII), 320-340 (KLSA…HKEF), and 342-362 (FVLP…AQME). N-linked (GlcNAc...) asparagine glycosylation is present at asparagine 382. The chain crosses the membrane as a helical span at residues 392–412 (LSVYFLLATNIPMALYMSLFH). An N-linked (GlcNAc...) asparagine glycan is attached at asparagine 490.

The protein belongs to the glycosyltransferase 22 family. Mostly expressed, mainly in vascular tissues, in leaves, roots, stems, flowers, siliques and pollen, and, to a lower extent, in seedlings.

The protein resides in the endoplasmic reticulum membrane. In terms of biological role, mannosyltransferase involved in glycosylphosphatidylinositol-anchor biosynthesis. Required for the pollen tube micropylar guidance and embryo development by regulating GPI-anchor mediated protein localization (e.g. COBL10 and A36). The chain is Mannosyltransferase APTG1 from Arabidopsis thaliana (Mouse-ear cress).